We begin with the raw amino-acid sequence, 76 residues long: CLAVATA3/ESR (CLE)-related protein 46 (76 aa).

Positions methionine 1 to cysteine 26 are cleaved as a signal peptide. The disordered stretch occupies residues glutamate 53–histidine 76. Residues proline 61 and proline 64 each carry the hydroxyproline modification. O-linked (Ara...) hydroxyproline glycosylation is present at proline 64.

This sequence belongs to the CLV3/ESR signal peptide family. The O-glycosylation (arabinosylation) of the hydroxyproline Pro-64 enhances binding affinity of the CLE46p peptide for its receptor.

It localises to the secreted. The protein localises to the extracellular space. Its function is as follows. Extracellular signal peptide that regulates cell fate. This is CLAVATA3/ESR (CLE)-related protein 46 from Arabidopsis thaliana (Mouse-ear cress).